Consider the following 115-residue polypeptide: uncharacterized protein (115 aa).

This is an uncharacterized protein from Schizosaccharomyces pombe (strain 972 / ATCC 24843) (Fission yeast).